Consider the following 520-residue polypeptide: 2-isopropylmalate synthase (520 aa).

Residues 4–266 (VEFLDTTLRD…TSDIVLNETV (263 aa)) form the Pyruvate carboxyltransferase domain. Residues D13, H201, H203, and N237 each coordinate Mn(2+). The tract at residues 390–520 (HFGDLKLTSN…AVSFRDVPTN (131 aa)) is regulatory domain.

Belongs to the alpha-IPM synthase/homocitrate synthase family. LeuA type 1 subfamily. In terms of assembly, homodimer. Mn(2+) serves as cofactor.

It is found in the cytoplasm. The catalysed reaction is 3-methyl-2-oxobutanoate + acetyl-CoA + H2O = (2S)-2-isopropylmalate + CoA + H(+). It functions in the pathway amino-acid biosynthesis; L-leucine biosynthesis; L-leucine from 3-methyl-2-oxobutanoate: step 1/4. In terms of biological role, catalyzes the condensation of the acetyl group of acetyl-CoA with 3-methyl-2-oxobutanoate (2-ketoisovalerate) to form 3-carboxy-3-hydroxy-4-methylpentanoate (2-isopropylmalate). This is 2-isopropylmalate synthase from Streptococcus gallolyticus (strain UCN34).